Consider the following 362-residue polypeptide: Phosphoserine aminotransferase (362 aa).

The L-glutamate site is built by Ser9 and Arg42. Pyridoxal 5'-phosphate contacts are provided by residues 76-77 (GR), Trp102, Thr153, Asp174, and Gln197. An N6-(pyridoxal phosphate)lysine modification is found at Lys198. Position 239-240 (239-240 (NT)) interacts with pyridoxal 5'-phosphate.

The protein belongs to the class-V pyridoxal-phosphate-dependent aminotransferase family. SerC subfamily. In terms of assembly, homodimer. Pyridoxal 5'-phosphate serves as cofactor.

Its subcellular location is the cytoplasm. The catalysed reaction is O-phospho-L-serine + 2-oxoglutarate = 3-phosphooxypyruvate + L-glutamate. The enzyme catalyses 4-(phosphooxy)-L-threonine + 2-oxoglutarate = (R)-3-hydroxy-2-oxo-4-phosphooxybutanoate + L-glutamate. It functions in the pathway amino-acid biosynthesis; L-serine biosynthesis; L-serine from 3-phospho-D-glycerate: step 2/3. It participates in cofactor biosynthesis; pyridoxine 5'-phosphate biosynthesis; pyridoxine 5'-phosphate from D-erythrose 4-phosphate: step 3/5. Its function is as follows. Catalyzes the reversible conversion of 3-phosphohydroxypyruvate to phosphoserine and of 3-hydroxy-2-oxo-4-phosphonooxybutanoate to phosphohydroxythreonine. The chain is Phosphoserine aminotransferase from Salmonella newport (strain SL254).